Reading from the N-terminus, the 411-residue chain is GPI-anchor transamidase (411 aa).

An N-terminal signal peptide occupies residues 1–22 (MRIAMHLPLLLLYIFLLPLSGA). Residues 23–376 (NNTDAAHEVI…DIDSNECFFT (354 aa)) are Lumenal-facing. Catalysis depends on residues histidine 157 and cysteine 199. Asparagine 256 and asparagine 346 each carry an N-linked (GlcNAc...) asparagine glycan. A helical transmembrane segment spans residues 377-397 (SFKQSATIILALIVTILWFML). Residues 398–411 (RGNTAKATYDLYTN) lie on the Cytoplasmic side of the membrane.

Belongs to the peptidase C13 family. In terms of assembly, forms a complex with CDC91, GPI16, GPI17 and GAA1. The disulfide bond between GPI8 and GPI16 is important for normal enzyme activity.

Its subcellular location is the endoplasmic reticulum membrane. The protein operates within glycolipid biosynthesis; glycosylphosphatidylinositol-anchor biosynthesis. Mediates GPI anchoring in the endoplasmic reticulum, by replacing a protein's C-terminal GPI attachment signal peptide with a pre-assembled GPI. During this transamidation reaction, the GPI transamidase forms a carbonyl intermediate with the substrate protein. In Saccharomyces cerevisiae (strain ATCC 204508 / S288c) (Baker's yeast), this protein is GPI-anchor transamidase (GPI8).